We begin with the raw amino-acid sequence, 427 residues long: Glutamate-1-semialdehyde 2,1-aminomutase (427 aa).

N6-(pyridoxal phosphate)lysine is present on Lys264.

Belongs to the class-III pyridoxal-phosphate-dependent aminotransferase family. HemL subfamily. In terms of assembly, homodimer. Pyridoxal 5'-phosphate serves as cofactor.

Its subcellular location is the cytoplasm. The catalysed reaction is (S)-4-amino-5-oxopentanoate = 5-aminolevulinate. Its pathway is porphyrin-containing compound metabolism; protoporphyrin-IX biosynthesis; 5-aminolevulinate from L-glutamyl-tRNA(Glu): step 2/2. The chain is Glutamate-1-semialdehyde 2,1-aminomutase from Clostridium botulinum (strain Eklund 17B / Type B).